The primary structure comprises 538 residues: MGLLLLVLILTPLLAAHRHPDFPLLEKAQQLLQSTGSPYSTNCWLCTSSSTETPGTAYPASPREWTSIEAELHISYHWDPNLKGLMRPANSLLSTVKQDFPDIRQKPPIFGPIFTNINLMGIAPICVTAKRKNGTNVGTLPSTVCNVTFTVDPNQQTYQTYTHKQFLHQPRFPKPPNITFPQGTLLDKSTRFCQGRPSSCSTRNFWFRPADYNQCLQISNLSSTAEWVLLDQTRNSLFWENKTKGANQSQTPCVQVLAGMTIATSYLGISAVSEFFGTSLTPLFHFHISTCLKTQGAFYICGQSIHQCLPSNWTGTCTIGYVTPDIFIAPGNISLPIPIYGNSQLPRVRRAIHFIPLLAGLGIIAGTGTGIAGITKASLTYSQLSKEIAKNIDTMAKALTTVQEQIDSLAAVVLQNRRGLDMLTAAQGGICLALDEKCCFWVNQSGKVQDNIRQLLNQASSLRERATQGWLNWEGTWKWFSWVLPFTGPLVSLLLLLLFGPCLLNLITQFVLSRLQAIKLQTNLSAGCRPHNIQESPF.

The signal sequence occupies residues 1–15; the sequence is MGLLLLVLILTPLLA. Residues 16–478 lie on the Extracellular side of the membrane; that stretch reads AHRHPDFPLL…GWLNWEGTWK (463 aa). The short motif at 43–46 is the CXXC element; it reads CWLC. Disulfide bonds link cysteine 43/cysteine 46, cysteine 43/cysteine 439, and cysteine 431/cysteine 438. Asparagine 133, asparagine 146, asparagine 177, asparagine 220, asparagine 241, asparagine 247, asparagine 312, and asparagine 332 each carry an N-linked (GlcNAc...) asparagine glycan. Residues 354 to 374 form a fusion peptide region; sequence FIPLLAGLGIIAGTGTGIAGI. A CKS-17 motif is present at residues 414–430; sequence LQNRRGLDMLTAAQGGI. Residues 431–439 carry the CX6CC motif; the sequence is CLALDEKCC. Asparagine 443 is a glycosylation site (N-linked (GlcNAc...) asparagine). Residues 479–499 form a helical membrane-spanning segment; it reads WFSWVLPFTGPLVSLLLLLLF. Topologically, residues 500–538 are cytoplasmic; it reads GPCLLNLITQFVLSRLQAIKLQTNLSAGCRPHNIQESPF.

Belongs to the gamma type-C retroviral envelope protein family. HERV class-I FRD env subfamily. The surface and transmembrane proteins form a heterodimer. They are attached by non-covalent interactions or by a labile interchain disulfide bond. In terms of processing, specific enzymatic cleavages in vivo yield the mature SU and TM proteins. Post-translationally, the CXXC motif is highly conserved across a broad range of retroviral envelope proteins. It is thought to participate in the formation of a labile disulfide bond possibly with the CX6CC motif present in the transmembrane protein.

It is found in the virion. The protein localises to the cell membrane. Its function is as follows. This endogenous retroviral envelope protein has retained its original fusogenic properties and participates in trophoblast fusion and the formation of a syncytium during placenta morphogenesis. The interaction with MFSD2A is apparently important for this process. Functionally, endogenous envelope proteins may have kept, lost or modified their original function during evolution but this one can still make pseudotypes with MLV, HIV-1 or SIV-1 virions and confer infectivity. Retroviral envelope proteins mediate receptor recognition and membrane fusion during early infection. The surface protein mediates receptor recognition, while the transmembrane protein anchors the envelope heterodimer to the viral membrane through one transmembrane domain. The other hydrophobic domain, called fusion peptide, mediates fusion of the viral membrane with the target cell membrane. The chain is Syncytin-2 (ERVFRD-1) from Pongo pygmaeus (Bornean orangutan).